The chain runs to 66 residues: Large ribosomal subunit protein bL35 (66 aa).

This sequence belongs to the bacterial ribosomal protein bL35 family.

This Hyphomonas neptunium (strain ATCC 15444) protein is Large ribosomal subunit protein bL35.